A 128-amino-acid chain; its full sequence is NADPH-dependent 7-cyano-7-deazaguanine reductase (128 aa).

Cys39 (thioimide intermediate) is an active-site residue. Asp46 serves as the catalytic Proton donor. Substrate-binding positions include 61 to 63 (IEL) and 80 to 81 (HE).

The protein belongs to the GTP cyclohydrolase I family. QueF type 1 subfamily.

Its subcellular location is the cytoplasm. It catalyses the reaction 7-aminomethyl-7-carbaguanine + 2 NADP(+) = 7-cyano-7-deazaguanine + 2 NADPH + 3 H(+). The protein operates within tRNA modification; tRNA-queuosine biosynthesis. Its function is as follows. Catalyzes the NADPH-dependent reduction of 7-cyano-7-deazaguanine (preQ0) to 7-aminomethyl-7-deazaguanine (preQ1). In Magnetococcus marinus (strain ATCC BAA-1437 / JCM 17883 / MC-1), this protein is NADPH-dependent 7-cyano-7-deazaguanine reductase.